We begin with the raw amino-acid sequence, 187 residues long: Crossover junction endodeoxyribonuclease RuvC (187 aa).

Catalysis depends on residues D7, E67, and D140. 3 residues coordinate Mg(2+): D7, E67, and D140.

It belongs to the RuvC family. Homodimer which binds Holliday junction (HJ) DNA. The HJ becomes 2-fold symmetrical on binding to RuvC with unstacked arms; it has a different conformation from HJ DNA in complex with RuvA. In the full resolvosome a probable DNA-RuvA(4)-RuvB(12)-RuvC(2) complex forms which resolves the HJ. Requires Mg(2+) as cofactor.

Its subcellular location is the cytoplasm. It catalyses the reaction Endonucleolytic cleavage at a junction such as a reciprocal single-stranded crossover between two homologous DNA duplexes (Holliday junction).. The RuvA-RuvB-RuvC complex processes Holliday junction (HJ) DNA during genetic recombination and DNA repair. Endonuclease that resolves HJ intermediates. Cleaves cruciform DNA by making single-stranded nicks across the HJ at symmetrical positions within the homologous arms, yielding a 5'-phosphate and a 3'-hydroxyl group; requires a central core of homology in the junction. The consensus cleavage sequence is 5'-(A/T)TT(C/G)-3'. Cleavage occurs on the 3'-side of the TT dinucleotide at the point of strand exchange. HJ branch migration catalyzed by RuvA-RuvB allows RuvC to scan DNA until it finds its consensus sequence, where it cleaves and resolves the cruciform DNA. In Prosthecochloris aestuarii (strain DSM 271 / SK 413), this protein is Crossover junction endodeoxyribonuclease RuvC.